Consider the following 102-residue polypeptide: Putative UPF0320 protein YMR326C (102 aa).

This sequence belongs to the UPF0320 family.

The protein is Putative UPF0320 protein YMR326C of Saccharomyces cerevisiae (strain ATCC 204508 / S288c) (Baker's yeast).